A 474-amino-acid chain; its full sequence is tRNA-2-methylthio-N(6)-dimethylallyladenosine synthase (474 aa).

In terms of domain architecture, MTTase N-terminal spans 3-120 (KKLHIKTWGC…LPEMIDQVQR (118 aa)). [4Fe-4S] cluster contacts are provided by Cys-12, Cys-49, Cys-83, Cys-157, Cys-161, and Cys-164. The region spanning 143 to 375 (RADGPTAFVS…QDRITQQAMR (233 aa)) is the Radical SAM core domain. The TRAM domain occupies 378–441 (RQMLGTVQRI…TNSLRGIFIR (64 aa)).

This sequence belongs to the methylthiotransferase family. MiaB subfamily. As to quaternary structure, monomer. It depends on [4Fe-4S] cluster as a cofactor.

The protein localises to the cytoplasm. The catalysed reaction is N(6)-dimethylallyladenosine(37) in tRNA + (sulfur carrier)-SH + AH2 + 2 S-adenosyl-L-methionine = 2-methylsulfanyl-N(6)-dimethylallyladenosine(37) in tRNA + (sulfur carrier)-H + 5'-deoxyadenosine + L-methionine + A + S-adenosyl-L-homocysteine + 2 H(+). Catalyzes the methylthiolation of N6-(dimethylallyl)adenosine (i(6)A), leading to the formation of 2-methylthio-N6-(dimethylallyl)adenosine (ms(2)i(6)A) at position 37 in tRNAs that read codons beginning with uridine. In Shewanella denitrificans (strain OS217 / ATCC BAA-1090 / DSM 15013), this protein is tRNA-2-methylthio-N(6)-dimethylallyladenosine synthase.